The following is a 170-amino-acid chain: UPF0161 protein At3g09310 (170 aa).

2 disordered regions span residues 49 to 70 and 147 to 170; these read CLSAKSTPSKPDPASPQDGEEL and SGIKLREGDEEEEDNYDDEDQRKI. A compositionally biased stretch (acidic residues) spans 154–170; sequence GDEEEEDNYDDEDQRKI.

The protein belongs to the UPF0161 family.

The chain is UPF0161 protein At3g09310 from Arabidopsis thaliana (Mouse-ear cress).